Consider the following 315-residue polypeptide: MTQKLPLALFLMGPTASGKTDLAIRLRQKYPVEIISVDSALIYRGMDIGTAKPDAQELALAPHRLIDILDPSEAYSAADFRRDALKEMADIVAQGKIPLLVGGTMLYFKALLEGLSPLPAADPVIRQQIELEAEKLGWQALHDQLQQIDPVSAQRIHPNDPQRLSRALEVYRISGKTLTELTQTKGEAIPYRVLQFAIAPKERAELHRRIELRFEKMVESGFEEEVKALYARDDLHPDLPSIRCVGYRQMWDYLDGHGTLDEAIYRGICATRQLAKRQITWLRSWDDLTWLDSENVDQAVETLSNAIASNEISCV.

Position 13-20 (13-20 (GPTASGKT)) interacts with ATP. 15 to 20 (TASGKT) provides a ligand contact to substrate. Interaction with substrate tRNA stretches follow at residues 38 to 41 (DSAL), 162 to 166 (QRLSR), 243 to 248 (RCVGYR), and 276 to 283 (KRQITWLR).

It belongs to the IPP transferase family. As to quaternary structure, monomer. Mg(2+) is required as a cofactor.

It catalyses the reaction adenosine(37) in tRNA + dimethylallyl diphosphate = N(6)-dimethylallyladenosine(37) in tRNA + diphosphate. Catalyzes the transfer of a dimethylallyl group onto the adenine at position 37 in tRNAs that read codons beginning with uridine, leading to the formation of N6-(dimethylallyl)adenosine (i(6)A). The protein is tRNA dimethylallyltransferase of Vibrio cholerae serotype O1 (strain ATCC 39541 / Classical Ogawa 395 / O395).